A 161-amino-acid chain; its full sequence is Troponin C, slow skeletal and cardiac muscles (161 aa).

Met1 carries the N-acetylmethionine modification. 4 consecutive EF-hand domains span residues 16–51, 52–87, 92–127, and 128–161; these read QKNEFKAAFDIFVLGAEDGCISTKELGKVMRMLGQN, PTPEELQEMIDEVDEDGSGTVDFDEFLVMMVRCMKD, KSEEELSDLFRMFDKNADGYIDLDELKIMLQATGET, and ITEDDIEELMKDGDKNNDGRIDYDEFLEFMKGVE. Residues Asp65, Asp67, Ser69, Thr71, and Glu76 each contribute to the Ca(2+) site. Ser98 carries the post-translational modification Phosphoserine. Ca(2+)-binding residues include Asp105, Asn107, Asp109, Tyr111, Glu116, Asp141, Asn143, Asp145, Arg147, and Glu152.

This sequence belongs to the troponin C family.

Its function is as follows. Troponin is the central regulatory protein of striated muscle contraction. Tn consists of three components: Tn-I which is the inhibitor of actomyosin ATPase, Tn-T which contains the binding site for tropomyosin and Tn-C. The binding of calcium to Tn-C abolishes the inhibitory action of Tn on actin filaments. This is Troponin C, slow skeletal and cardiac muscles (TNNC1) from Homo sapiens (Human).